The primary structure comprises 385 residues: Protein pelota homolog (385 aa).

Lys-162 participates in a covalent cross-link: Glycyl lysine isopeptide (Lys-Gly) (interchain with G-Cter in SUMO2). Residues Ser-374, Ser-380, Ser-381, and Ser-382 each carry the phosphoserine modification.

The protein belongs to the eukaryotic release factor 1 family. Pelota subfamily. In terms of assembly, component of the Pelota-HBS1L complex, also named Dom34-Hbs1 complex, composed of PELO and HBS1L. Interacts with PINK1. Interacts with ABCE1. Interacts with CNOT4. Requires a divalent metal cation as cofactor. Ubiquitously expressed.

The protein resides in the cytoplasm. Its function is as follows. Component of the Pelota-HBS1L complex, a complex that recognizes stalled ribosomes and triggers the No-Go Decay (NGD) pathway. In the Pelota-HBS1L complex, PELO recognizes ribosomes stalled at the 3' end of an mRNA and engages stalled ribosomes by destabilizing mRNA in the mRNA channel. Following mRNA extraction from stalled ribosomes by the SKI complex, the Pelota-HBS1L complex promotes recruitment of ABCE1, which drives the disassembly of stalled ribosomes, followed by degradation of damaged mRNAs as part of the NGD pathway. As part of the PINK1-regulated signaling, upon mitochondrial damage is recruited to the ribosome/mRNA-ribonucleoprotein complex associated to mitochondrial outer membrane thereby enabling the recruitment of autophagy receptors and induction of mitophagy. The sequence is that of Protein pelota homolog from Homo sapiens (Human).